The following is a 469-amino-acid chain: Solute carrier family 52, riboflavin transporter, member 3 (469 aa).

At 1–2 (MA) the chain is on the cytoplasmic side. Residues 3-23 (FLMHLLVCVFGMGSWVTINGL) traverse the membrane as a helical segment. Residues 24–43 (WVELPLLVMELPEGWYLPSY) are Extracellular-facing. The helical transmembrane segment at 44-64 (LTVVIQLANIGPLLVTLLHHF) threads the bilayer. Residues 65 to 71 (RPSCLSE) lie on the Cytoplasmic side of the membrane. Residues 72–92 (VPIIFTLLGVGTVTCIIFAFL) form a helical membrane-spanning segment. The Extracellular portion of the chain corresponds to 93 to 97 (WNMTS). Asparagine 94 is a glycosylation site (N-linked (GlcNAc...) asparagine). Residues 98-118 (WVLDGHHSIAFLVLTFFLALV) traverse the membrane as a helical segment. The Cytoplasmic portion of the chain corresponds to 119–137 (DCTSSVTFLPFMSRLPTYY). A helical membrane pass occupies residues 138–158 (LTTFFVGEGLSGLLPALVALA). At 159–220 (QGSGLTTCVN…SRYLPAHFSP (62 aa)) the chain is on the extracellular side. N-linked (GlcNAc...) asparagine glycosylation occurs at asparagine 168. A helical transmembrane segment spans residues 221–241 (LVFFLLLSIMMACCLVAFFVL). The Cytoplasmic segment spans residues 242-292 (QRQPRCWEASVEDLLNDQVTLHSIRPREENDLGPAGTVDSSQGQGYLEEKA). Residue serine 251 is modified to Phosphoserine. The helical transmembrane segment at 293-313 (APCCPAHLAFIYTLVAFVNAL) threads the bilayer. The Extracellular portion of the chain corresponds to 314-335 (TNGMLPSVQTYSCLSYGPVAYH). A helical membrane pass occupies residues 336–356 (LAATLSIVANPLASLVSMFLP). The Cytoplasmic segment spans residues 357–359 (NRS). Residues 360–380 (LLFLGVLSVLGTCFGGYNMAM) form a helical membrane-spanning segment. The Extracellular portion of the chain corresponds to 381–396 (AVMSPCPLLQGHWGGE). Cysteine 386 and cysteine 463 are oxidised to a cystine. The helical transmembrane segment at 397-417 (VLIVASWVLFSGCLSYVKVML) threads the bilayer. Topologically, residues 418-427 (GVVLRDLSRS) are cytoplasmic. A helical transmembrane segment spans residues 428-448 (ALLWCGAAVQLGSLLGALLMF). Topologically, residues 449–469 (PLVNVLRLFSSADFCNLHCPA) are extracellular.

It belongs to the riboflavin transporter family. As to expression, predominantly expressed in testis. Highly expressed in small intestine and prostate.

The protein localises to the apical cell membrane. It localises to the cell membrane. Its subcellular location is the nucleus membrane. It is found in the cytoplasm. The enzyme catalyses riboflavin(in) = riboflavin(out). Its activity is regulated as follows. Activity is strongly inhibited by riboflavin analogs, such as lumiflavin, flavin mononucleotide (FMN), flavin adenine dinucleotide (FAD), by methylene blue, and to a lesser extent by amiloride. Riboflavin transport is Na(+)-independent at low pH but significantly reduced by Na(+) depletion under neutral pH conditions. Plasma membrane transporter mediating the uptake by cells of the water soluble vitamin B2/riboflavin that plays a key role in biochemical oxidation-reduction reactions of the carbohydrate, lipid, and amino acid metabolism. Humans are unable to synthesize vitamin B2/riboflavin and must obtain it via intestinal absorption. The protein is Solute carrier family 52, riboflavin transporter, member 3 (SLC52A3) of Homo sapiens (Human).